An 843-amino-acid chain; its full sequence is Elongation factor 2 (843 aa).

One can recognise a tr-type G domain in the interval histidine 17–alanine 253. Position 26-33 (alanine 26–serine 33) interacts with GTP. Phosphothreonine occurs at positions 57 and 59. A GTP-binding site is contributed by asparagine 158–aspartate 161. Histidine 700 bears the Diphthamide mark.

The protein belongs to the TRAFAC class translation factor GTPase superfamily. Classic translation factor GTPase family. EF-G/EF-2 subfamily. In terms of processing, phosphorylation by EF-2 kinase completely inactivates EF-2.

Its subcellular location is the cytoplasm. It carries out the reaction GTP + H2O = GDP + phosphate + H(+). Functionally, catalyzes the GTP-dependent ribosomal translocation step during translation elongation. During this step, the ribosome changes from the pre-translocational (PRE) to the post-translocational (POST) state as the newly formed A-site-bound peptidyl-tRNA and P-site-bound deacylated tRNA move to the P and E sites, respectively. Catalyzes the coordinated movement of the two tRNA molecules, the mRNA and conformational changes in the ribosome. This Beta vulgaris (Sugar beet) protein is Elongation factor 2.